We begin with the raw amino-acid sequence, 492 residues long: 3-octaprenyl-4-hydroxybenzoate carboxy-lyase (492 aa).

Asparagine 172 serves as a coordination point for Mn(2+). Residues 175–177 (IYR), 189–191 (RWL), and 194–195 (RG) each bind prenylated FMN. Glutamate 238 lines the Mn(2+) pocket. Aspartate 287 functions as the Proton donor in the catalytic mechanism.

This sequence belongs to the UbiD family. As to quaternary structure, homohexamer. Prenylated FMN is required as a cofactor. Mn(2+) serves as cofactor.

The protein resides in the cell membrane. It catalyses the reaction a 4-hydroxy-3-(all-trans-polyprenyl)benzoate + H(+) = a 2-(all-trans-polyprenyl)phenol + CO2. The protein operates within cofactor biosynthesis; ubiquinone biosynthesis. Catalyzes the decarboxylation of 3-octaprenyl-4-hydroxy benzoate to 2-octaprenylphenol, an intermediate step in ubiquinone biosynthesis. This Pasteurella multocida (strain Pm70) protein is 3-octaprenyl-4-hydroxybenzoate carboxy-lyase.